The primary structure comprises 808 residues: Probable inorganic carbon transporter subunit DabA (808 aa).

Residues Cys-334, Asp-336, His-494, and Cys-509 each coordinate Zn(2+).

It belongs to the inorganic carbon transporter (TC 9.A.2) DabA family. In terms of assembly, forms a complex with DabB. It depends on Zn(2+) as a cofactor.

It is found in the cell inner membrane. In terms of biological role, part of an energy-coupled inorganic carbon pump. The protein is Probable inorganic carbon transporter subunit DabA of Rhodopseudomonas palustris (strain BisB5).